The sequence spans 158 residues: Photosystem I assembly protein Ycf3 (158 aa).

3 TPR repeats span residues 35–68, 72–105, and 113–146; these read AFSY…EEDV, SYII…NPRL, and AVIY…APGQ.

It belongs to the Ycf3 family.

It localises to the plastid. It is found in the chloroplast thylakoid membrane. Its function is as follows. Essential for the assembly of the photosystem I (PSI) complex. May act as a chaperone-like factor to guide the assembly of the PSI subunits. The protein is Photosystem I assembly protein Ycf3 of Cyanidioschyzon merolae (strain NIES-3377 / 10D) (Unicellular red alga).